Consider the following 140-residue polypeptide: Nucleoside diphosphate kinase (140 aa).

Lys-11, Phe-59, Arg-87, Thr-93, Arg-104, and Asn-114 together coordinate ATP. The Pros-phosphohistidine intermediate role is filled by His-117.

This sequence belongs to the NDK family. Homotetramer. It depends on Mg(2+) as a cofactor.

The protein localises to the cytoplasm. It carries out the reaction a 2'-deoxyribonucleoside 5'-diphosphate + ATP = a 2'-deoxyribonucleoside 5'-triphosphate + ADP. It catalyses the reaction a ribonucleoside 5'-diphosphate + ATP = a ribonucleoside 5'-triphosphate + ADP. In terms of biological role, major role in the synthesis of nucleoside triphosphates other than ATP. The ATP gamma phosphate is transferred to the NDP beta phosphate via a ping-pong mechanism, using a phosphorylated active-site intermediate. This is Nucleoside diphosphate kinase from Methylorubrum populi (strain ATCC BAA-705 / NCIMB 13946 / BJ001) (Methylobacterium populi).